Here is a 498-residue protein sequence, read N- to C-terminus: Phenylalanine--tRNA ligase alpha subunit (498 aa).

Residues T328, 372–374 (QVE), and Y412 each bind L-phenylalanine. E414 contacts Mg(2+). F438 contributes to the L-phenylalanine binding site.

It belongs to the class-II aminoacyl-tRNA synthetase family. Phe-tRNA synthetase alpha subunit type 2 subfamily. As to quaternary structure, tetramer of two alpha and two beta subunits. Mg(2+) serves as cofactor.

The protein localises to the cytoplasm. The catalysed reaction is tRNA(Phe) + L-phenylalanine + ATP = L-phenylalanyl-tRNA(Phe) + AMP + diphosphate + H(+). The protein is Phenylalanine--tRNA ligase alpha subunit of Drosophila melanogaster (Fruit fly).